Reading from the N-terminus, the 156-residue chain is MNLNATLIGQLIAFALFTWFCVKFVWPPIIKAIEERQSSIANALASAEAARKEQADTKTLAEEEITKAKIQAQEIIDSANKRRNEVLDEVKAEAETLKAKIIEQGYAEVEAERKRVQEELRVKVASLAIAGAEKIVGRTVDEAANNDIIDKLVAEL.

The chain crosses the membrane as a helical span at residues 7–29 (LIGQLIAFALFTWFCVKFVWPPI).

The protein belongs to the ATPase B chain family. F-type ATPases have 2 components, F(1) - the catalytic core - and F(0) - the membrane proton channel. F(1) has five subunits: alpha(3), beta(3), gamma(1), delta(1), epsilon(1). F(0) has three main subunits: a(1), b(2) and c(10-14). The alpha and beta chains form an alternating ring which encloses part of the gamma chain. F(1) is attached to F(0) by a central stalk formed by the gamma and epsilon chains, while a peripheral stalk is formed by the delta and b chains.

Its subcellular location is the cell inner membrane. In terms of biological role, f(1)F(0) ATP synthase produces ATP from ADP in the presence of a proton or sodium gradient. F-type ATPases consist of two structural domains, F(1) containing the extramembraneous catalytic core and F(0) containing the membrane proton channel, linked together by a central stalk and a peripheral stalk. During catalysis, ATP synthesis in the catalytic domain of F(1) is coupled via a rotary mechanism of the central stalk subunits to proton translocation. Its function is as follows. Component of the F(0) channel, it forms part of the peripheral stalk, linking F(1) to F(0). In Actinobacillus succinogenes (strain ATCC 55618 / DSM 22257 / CCUG 43843 / 130Z), this protein is ATP synthase subunit b.